Here is a 111-residue protein sequence, read N- to C-terminus: MAQEGKAYIHLALAIYYAGGKIDEETLKKAAEAIGMQVDEAKIKMLVASLEEVNLEEVLKQAVAAPVAAAAAAPAAAPAAEEKAEEEKKEEEEEKKEEEVDLSGLSGMFGF.

The tract at residues 75-111 (AAAPAAEEKAEEEKKEEEEEKKEEEVDLSGLSGMFGF) is disordered. Residues 88-101 (KKEEEEEKKEEEVD) show a composition bias toward acidic residues.

Belongs to the eukaryotic ribosomal protein P1/P2 family. As to quaternary structure, part of the 50S ribosomal subunit. Homodimer, it forms part of the ribosomal stalk which helps the ribosome interact with GTP-bound translation factors. Forms a heptameric uL10/P0(P1)2(P1)2(P1)2 complex, where uL10/P0 forms an elongated spine to which the P1 dimers bind in a sequential fashion.

Functionally, forms part of the ribosomal stalk, playing a central role in the interaction of the ribosome with GTP-bound translation factors. This is Large ribosomal subunit protein P1 from Aeropyrum pernix (strain ATCC 700893 / DSM 11879 / JCM 9820 / NBRC 100138 / K1).